Here is a 282-residue protein sequence, read N- to C-terminus: Pantothenate synthetase (282 aa).

30–37 contributes to the ATP binding site; the sequence is MGNLHEGH. Histidine 37 serves as the catalytic Proton donor. Residue glutamine 61 coordinates (R)-pantoate. Glutamine 61 is a binding site for beta-alanine. 149–152 lines the ATP pocket; that stretch reads GEKD. Glutamine 155 contributes to the (R)-pantoate binding site. ATP-binding positions include valine 178 and 186 to 189; that span reads KSSR.

The protein belongs to the pantothenate synthetase family. Homodimer.

It localises to the cytoplasm. It catalyses the reaction (R)-pantoate + beta-alanine + ATP = (R)-pantothenate + AMP + diphosphate + H(+). It participates in cofactor biosynthesis; (R)-pantothenate biosynthesis; (R)-pantothenate from (R)-pantoate and beta-alanine: step 1/1. Its function is as follows. Catalyzes the condensation of pantoate with beta-alanine in an ATP-dependent reaction via a pantoyl-adenylate intermediate. In Marinobacter nauticus (strain ATCC 700491 / DSM 11845 / VT8) (Marinobacter aquaeolei), this protein is Pantothenate synthetase.